The primary structure comprises 274 residues: 3-methyl-2-oxobutanoate hydroxymethyltransferase (274 aa).

Mg(2+)-binding residues include D49 and D88. Residues 49–50 (DS), D88, and K118 contribute to the 3-methyl-2-oxobutanoate site. E120 is a Mg(2+) binding site. The active-site Proton acceptor is E187.

The protein belongs to the PanB family. As to quaternary structure, homodecamer; pentamer of dimers. Mg(2+) is required as a cofactor.

The protein localises to the cytoplasm. The enzyme catalyses 3-methyl-2-oxobutanoate + (6R)-5,10-methylene-5,6,7,8-tetrahydrofolate + H2O = 2-dehydropantoate + (6S)-5,6,7,8-tetrahydrofolate. The protein operates within cofactor biosynthesis; (R)-pantothenate biosynthesis; (R)-pantoate from 3-methyl-2-oxobutanoate: step 1/2. In terms of biological role, catalyzes the reversible reaction in which hydroxymethyl group from 5,10-methylenetetrahydrofolate is transferred onto alpha-ketoisovalerate to form ketopantoate. In Rhodopseudomonas palustris (strain BisB18), this protein is 3-methyl-2-oxobutanoate hydroxymethyltransferase.